The chain runs to 80 residues: Large ribosomal subunit protein eL38 (80 aa).

Belongs to the eukaryotic ribosomal protein eL38 family. In terms of assembly, component of the large ribosomal subunit (LSU). Mature N.crassa ribosomes consist of a small (40S) and a large (60S) subunit. The 40S small subunit contains 1 molecule of ribosomal RNA (18S rRNA) and at least 32 different proteins. The large 60S subunit contains 3 rRNA molecules (26S, 5.8S and 5S rRNA) and at least 42 different proteins.

It localises to the cytoplasm. In terms of biological role, component of the ribosome, a large ribonucleoprotein complex responsible for the synthesis of proteins in the cell. The small ribosomal subunit (SSU) binds messenger RNAs (mRNAs) and translates the encoded message by selecting cognate aminoacyl-transfer RNA (tRNA) molecules. The large subunit (LSU) contains the ribosomal catalytic site termed the peptidyl transferase center (PTC), which catalyzes the formation of peptide bonds, thereby polymerizing the amino acids delivered by tRNAs into a polypeptide chain. The nascent polypeptides leave the ribosome through a tunnel in the LSU and interact with protein factors that function in enzymatic processing, targeting, and the membrane insertion of nascent chains at the exit of the ribosomal tunnel. The sequence is that of Large ribosomal subunit protein eL38 (rpl-38) from Neurospora crassa (strain ATCC 24698 / 74-OR23-1A / CBS 708.71 / DSM 1257 / FGSC 987).